A 263-amino-acid polypeptide reads, in one-letter code: Copper homeostasis protein cutC homolog (263 aa).

The protein belongs to the CutC family.

Functionally, involved in copper homeostasis. The protein is Copper homeostasis protein cutC homolog of Drosophila melanogaster (Fruit fly).